A 369-amino-acid polypeptide reads, in one-letter code: Putative protein FAM10A5 (369 aa).

Residues 38 to 98 (MGGKVPPATQ…IEPDTDAPQE (61 aa)) are disordered. The segment covering 49 to 73 (AKSEENTKEEKPDSKKVEEDLKADE) has biased composition (basic and acidic residues). The span at 89-98 (IEPDTDAPQE) shows a compositional bias: acidic residues. 3 TPR repeats span residues 114-147 (ANDK…NPRL), 149-181 (ILYA…NPDS), and 183-215 (QPYK…DYDE). Over residues 256-272 (KAQEEQERAQREEEARR) the composition is skewed to basic and acidic residues. The disordered stretch occupies residues 256 to 300 (KAQEEQERAQREEEARRQSGAHYGPFPGGFPGGMPGNFPGGMPGM). Gly residues predominate over residues 281–300 (FPGGFPGGMPGNFPGGMPGM). The 40-residue stretch at 319-358 (DPEALAAMQDPEVMVAFQDVAQNPANMSKYQSNPKVMNLI) folds into the STI1 domain. A Phosphoserine modification is found at serine 346. N6-acetyllysine occurs at positions 353 and 360.

The protein belongs to the FAM10 family.

Its subcellular location is the cytoplasm. This is Putative protein FAM10A5 (ST13P5) from Homo sapiens (Human).